Here is an 87-residue protein sequence, read N- to C-terminus: Phosphoribosyl-ATP pyrophosphatase (87 aa).

This sequence belongs to the PRA-PH family.

Its subcellular location is the cytoplasm. The catalysed reaction is 1-(5-phospho-beta-D-ribosyl)-ATP + H2O = 1-(5-phospho-beta-D-ribosyl)-5'-AMP + diphosphate + H(+). Its pathway is amino-acid biosynthesis; L-histidine biosynthesis; L-histidine from 5-phospho-alpha-D-ribose 1-diphosphate: step 2/9. This is Phosphoribosyl-ATP pyrophosphatase from Clavibacter sepedonicus (Clavibacter michiganensis subsp. sepedonicus).